The primary structure comprises 529 residues: CTP synthase (529 aa).

Residues 1 to 270 (MKYIVVTGGV…ADVVCSYLSL (270 aa)) are amidoligase domain. Serine 12 lines the CTP pocket. Residue serine 12 participates in UTP binding. ATP contacts are provided by residues 13–18 (GLGKGI) and aspartate 70. Residues aspartate 70 and glutamate 145 each coordinate Mg(2+). Residues 152-154 (DIE), 191-196 (KTKPTQ), and lysine 227 contribute to the CTP site. UTP contacts are provided by residues 191–196 (KTKPTQ) and lysine 227. 243-245 (KDA) contributes to the ATP binding site. The 233-residue stretch at 293-525 (VAIVSKYGIE…VEACKKNKSS (233 aa)) folds into the Glutamine amidotransferase type-1 domain. Residue glycine 349 participates in L-glutamine binding. Cysteine 376 (nucleophile; for glutamine hydrolysis) is an active-site residue. L-glutamine contacts are provided by residues 377–380 (LGFQ), glutamate 400, and arginine 455. Active-site residues include histidine 498 and glutamate 500.

This sequence belongs to the CTP synthase family. As to quaternary structure, homotetramer.

The catalysed reaction is UTP + L-glutamine + ATP + H2O = CTP + L-glutamate + ADP + phosphate + 2 H(+). The enzyme catalyses L-glutamine + H2O = L-glutamate + NH4(+). It carries out the reaction UTP + NH4(+) + ATP = CTP + ADP + phosphate + 2 H(+). Its pathway is pyrimidine metabolism; CTP biosynthesis via de novo pathway; CTP from UDP: step 2/2. With respect to regulation, allosterically activated by GTP, when glutamine is the substrate; GTP has no effect on the reaction when ammonia is the substrate. The allosteric effector GTP functions by stabilizing the protein conformation that binds the tetrahedral intermediate(s) formed during glutamine hydrolysis. Inhibited by the product CTP, via allosteric rather than competitive inhibition. In terms of biological role, catalyzes the ATP-dependent amination of UTP to CTP with either L-glutamine or ammonia as the source of nitrogen. Regulates intracellular CTP levels through interactions with the four ribonucleotide triphosphates. The polypeptide is CTP synthase (Methanoculleus marisnigri (strain ATCC 35101 / DSM 1498 / JR1)).